The chain runs to 439 residues: C4-dicarboxylate transport protein 1 (439 aa).

Transmembrane regions (helical) follow at residues 18 to 38 (VLYI…WLWP), 56 to 76 (LIKM…IAHV), 91 to 111 (IYFE…ANVI), 157 to 177 (GEIL…MSLG), 193 to 213 (AIFG…FGAM), and 231 to 251 (LIAT…GIIA).

Belongs to the dicarboxylate/amino acid:cation symporter (DAACS) (TC 2.A.23) family.

It is found in the cell inner membrane. Responsible for the transport of dicarboxylates such as succinate, fumarate, and malate from the periplasm across the membrane. The chain is C4-dicarboxylate transport protein 1 from Bradyrhizobium sp. (strain ORS 278).